Consider the following 470-residue polypeptide: GDP-Man:Man(3)GlcNAc(2)-PP-Dol alpha-1,2-mannosyltransferase (470 aa).

The Lumenal portion of the chain corresponds to Met-1–Thr-15. A helical membrane pass occupies residues Val-16 to Phe-36. The Cytoplasmic segment spans residues Arg-37–Gln-131. The segment at residues Ala-132–Ile-152 is an intramembrane region (helical). Residues Asp-153–His-378 lie on the Cytoplasmic side of the membrane. Residues Phe-379 to Gly-399 constitute an intramembrane region (helical). The Cytoplasmic segment spans residues Gly-400–Leu-470.

The protein belongs to the glycosyltransferase group 1 family. Glycosyltransferase 4 subfamily.

Its subcellular location is the endoplasmic reticulum membrane. The enzyme catalyses an alpha-D-Man-(1-&gt;3)-[alpha-D-Man-(1-&gt;6)]-beta-D-Man-(1-&gt;4)-beta-D-GlcNAc-(1-&gt;4)-alpha-D-GlcNAc-diphospho-di-trans,poly-cis-dolichol + 2 GDP-alpha-D-mannose = an alpha-D-Man-(1-&gt;2)-alpha-D-Man-(1-&gt;2)-alpha-D-Man-(1-&gt;3)-[alpha-D-Man-(1-&gt;6)]-beta-D-Man-(1-&gt;4)-beta-D-GlcNAc-(1-&gt;4)-alpha-D-GlcNAc-diphospho-di-trans,poly-cis-dolichol + 2 GDP + 2 H(+). It functions in the pathway protein modification; protein glycosylation. In terms of biological role, GDP-Man:Man(3)GlcNAc(2)-PP-Dol alpha-1,2-mannosyltransferase that operates in the biosynthetic pathway of dolichol-linked oligosaccharides, the glycan precursors employed in protein asparagine (N)-glycosylation. The assembly of dolichol-linked oligosaccharides begins on the cytosolic side of the endoplasmic reticulum membrane and finishes in its lumen. The sequential addition of sugars to dolichol pyrophosphate produces dolichol-linked oligosaccharides containing fourteen sugars, including two GlcNAcs, nine mannoses and three glucoses. Once assembled, the oligosaccharide is transferred from the lipid to nascent proteins by oligosaccharyltransferases. Catalyzes, on the cytoplasmic face of the endoplasmic reticulum, the addition of the fourth and fifth mannose residues to the dolichol-linked oligosaccharide chain, to produce Man(5)GlcNAc(2)-PP-dolichol core oligosaccharide. Man(5)GlcNAc(2)-PP-dolichol is a substrate for ALG3, the following enzyme in the biosynthetic pathway. In Caenorhabditis elegans, this protein is GDP-Man:Man(3)GlcNAc(2)-PP-Dol alpha-1,2-mannosyltransferase.